We begin with the raw amino-acid sequence, 153 residues long: Regulator of sigma D (153 aa).

This sequence belongs to the Rsd/AlgQ family. In terms of assembly, interacts with RpoD.

The protein localises to the cytoplasm. Its function is as follows. Binds RpoD and negatively regulates RpoD-mediated transcription activation by preventing the interaction between the primary sigma factor RpoD with the catalytic core of the RNA polymerase and with promoter DNA. May be involved in replacement of the RNA polymerase sigma subunit from RpoD to RpoS during the transition from exponential growth to the stationary phase. The sequence is that of Regulator of sigma D from Pectobacterium atrosepticum (strain SCRI 1043 / ATCC BAA-672) (Erwinia carotovora subsp. atroseptica).